Consider the following 207-residue polypeptide: Protein GET1 (207 aa).

Residues 1 to 4 (MPSL) lie on the Lumenal side of the membrane. A helical membrane pass occupies residues 5-24 (LISVLFLHIAIYIINTIAAS). Residues 25–110 (TIDSLLWLIY…FFDVAVKALR (86 aa)) lie on the Cytoplasmic side of the membrane. A coiled-coil region spans residues 44 to 97 (IAREQHQMKLEVVQLKREMNATSSQDEFAKWAKLRRRHDKALEEYEVKNKQFSR). A helical membrane pass occupies residues 111-131 (WAGTSGLIVFLQFWFSKTPIF). Residues 132-155 (TLPPSWIPWQVEWVLSFPRAPMGT) lie on the Lumenal side of the membrane. The chain crosses the membrane as a helical span at residues 156 to 172 (VSIQVWGGACAVVVALI). Residues 173–207 (GEAIGATVRYLYASKDSMEAIKVGAGAVEKEKKRQ) lie on the Cytoplasmic side of the membrane.

This sequence belongs to the WRB/GET1 family. As to quaternary structure, interacts with GET3.

It localises to the endoplasmic reticulum membrane. Functionally, required for the post-translational delivery of tail-anchored (TA) proteins to the endoplasmic reticulum. Acts as a membrane receptor for soluble GET3, which recognizes and selectively binds the transmembrane domain of TA proteins in the cytosol. This Paracoccidioides brasiliensis (strain Pb18) protein is Protein GET1.